A 330-amino-acid chain; its full sequence is Pseudouridine-5'-phosphate glycosidase (330 aa).

Glutamate 50 (proton donor) is an active-site residue. Substrate is bound by residues lysine 112 and valine 132. Aspartate 164 contacts Mn(2+). Serine 166–aspartate 168 lines the substrate pocket. Lysine 185 acts as the Nucleophile in catalysis.

It belongs to the pseudouridine-5'-phosphate glycosidase family. As to quaternary structure, homotrimer. Mn(2+) is required as a cofactor.

The protein localises to the peroxisome. It carries out the reaction D-ribose 5-phosphate + uracil = psi-UMP + H2O. Its function is as follows. Catalyzes the reversible cleavage of pseudouridine 5'-phosphate (PsiMP) to ribose 5-phosphate and uracil. Functions biologically in the cleavage direction, as part of a pseudouridine degradation pathway. Acts together with the pseudouridine kinase PUKI in the peroxisome to prevent toxic pseudouridine monophosphate accumulation. Can catalyze the formation of pseudouridine 5'-phosphate (reverse reaction) in vitro, with a catalytic efficiency 4 times lower than the hydrolysis reaction. The sequence is that of Pseudouridine-5'-phosphate glycosidase from Arabidopsis thaliana (Mouse-ear cress).